A 272-amino-acid polypeptide reads, in one-letter code: Tryptophan synthase alpha chain (272 aa).

Active-site proton acceptor residues include Glu49 and Glu60.

The protein belongs to the TrpA family. Tetramer of two alpha and two beta chains.

It catalyses the reaction (1S,2R)-1-C-(indol-3-yl)glycerol 3-phosphate + L-serine = D-glyceraldehyde 3-phosphate + L-tryptophan + H2O. Its pathway is amino-acid biosynthesis; L-tryptophan biosynthesis; L-tryptophan from chorismate: step 5/5. Functionally, the alpha subunit is responsible for the aldol cleavage of indoleglycerol phosphate to indole and glyceraldehyde 3-phosphate. This is Tryptophan synthase alpha chain from Legionella pneumophila (strain Paris).